The chain runs to 446 residues: Acyl-lipid (8-3)-desaturase (446 aa).

Residues 6–82 (GKTFTWEELA…MKKYYVGTLV (77 aa)) form the Cytochrome b5 heme-binding domain. Positions 41 and 64 each coordinate heme. 2 helical membrane-spanning segments follow: residues 125 to 145 (ALIFGSLIASYYAQLFVPFVV) and 150 to 170 (LQVVFAIIMGFACAQVGLNPL). A Histidine box-1 motif is present at residues 171-175 (HDASH). The Histidine box-2 signature appears at 207–212 (HMLGHH). The Histidine box-3 motif lies at 387–391 (QAVHH).

Belongs to the fatty acid desaturase type 1 family. Fe(2+) serves as cofactor.

The protein localises to the membrane. The catalysed reaction is an (8Z,11Z,14Z)-icosatrienoyl-containing glycerolipid + 2 Fe(II)-[cytochrome b5] + O2 + 2 H(+) = (5Z,8Z,11Z,14Z)-eicosatetraenoyl-containing glycerolipid + 2 Fe(III)-[cytochrome b5] + 2 H2O. It carries out the reaction an (8Z,11Z,14Z,17Z)-eicosatetraenoyl-containing glycerolipid + 2 Fe(II)-[cytochrome b5] + O2 + 2 H(+) = a (5Z,8Z,11Z,14Z,17Z)-eicosapentaenoyl-containing glycerolipid + 2 Fe(III)-[cytochrome b5] + 2 H2O. In terms of biological role, fatty acid desaturase that introduces a cis double bond at the 5-position in 20-carbon polyunsaturated fatty acids incorporated in a glycerolipid that contain a Delta(8) double bond. Involved in the conversion of di-homo-Delta-linolenic acid to arachidonic acid. Essential in the production of eicosanoids. This chain is Acyl-lipid (8-3)-desaturase (DES1), found in Mortierella alpina (Oleaginous fungus).